The chain runs to 92 residues: Large ribosomal subunit protein eL43 (92 aa).

Residues 39–60 form a C4-type zinc finger; the sequence is CDFCGKYGMKRQAVGIWCCKGC.

The protein belongs to the eukaryotic ribosomal protein eL43 family.

The protein is Large ribosomal subunit protein eL43 (RPL37a) of Ostreococcus tauri.